The following is a 380-amino-acid chain: MAPNIRKSHPLLKMINNSLIDLPAPSNISAWWNFGSLLAVCLMTQILTGLLLAMHYTADTSLAFSSVAHTCRNVQYGWLIRNLHANGASFFFICIFLHIGRGLYYGSYLYKETWNTGVILLLTLMATAFVGYVLPWGQMSFWGATVITNLFSAIPYIGHTLVEWAWGGFSVDNPTLTRFFALHFLLPFAIAGITIIHLTFLHESGSNNPLGISSDSDKIPFHPYYSFKDILGLTLMLTPFLTLALFSPNLLGDPENFTPANPLVTPPHIKPEWYFLFAYAILRSIPNKLGGVLALAASVLILFLIPFLHKSKQRTMTFRPLSQTLFWLLVANLLILTWIGSQPVEHPFIIIGQMASLSYFTILLILFPTIGTLENKMLNY.

Transmembrane regions (helical) follow at residues 34 to 54 (FGSLLAVCLMTQILTGLLLAM), 78 to 99 (WLIRNLHANGASFFFICIFLHI), 114 to 134 (WNTGVILLLTLMATAFVGYVL), and 179 to 199 (FFALHFLLPFAIAGITIIHLT). Heme b-binding residues include H84 and H98. Residues H183 and H197 each contribute to the heme b site. H202 provides a ligand contact to a ubiquinone. The next 4 membrane-spanning stretches (helical) occupy residues 227-247 (FKDILGLTLMLTPFLTLALFS), 289-309 (LGGVLALAASVLILFLIPFLH), 321-341 (LSQTLFWLLVANLLILTWIGS), and 348-368 (FIIIGQMASLSYFTILLILFP).

The protein belongs to the cytochrome b family. As to quaternary structure, the cytochrome bc1 complex contains 11 subunits: 3 respiratory subunits (MT-CYB, CYC1 and UQCRFS1), 2 core proteins (UQCRC1 and UQCRC2) and 6 low-molecular weight proteins (UQCRH/QCR6, UQCRB/QCR7, UQCRQ/QCR8, UQCR10/QCR9, UQCR11/QCR10 and a cleavage product of UQCRFS1). This cytochrome bc1 complex then forms a dimer. The cofactor is heme b.

Its subcellular location is the mitochondrion inner membrane. Component of the ubiquinol-cytochrome c reductase complex (complex III or cytochrome b-c1 complex) that is part of the mitochondrial respiratory chain. The b-c1 complex mediates electron transfer from ubiquinol to cytochrome c. Contributes to the generation of a proton gradient across the mitochondrial membrane that is then used for ATP synthesis. In Gallus gallus (Chicken), this protein is Cytochrome b (MT-CYB).